Reading from the N-terminus, the 829-residue chain is Periplasmic nitrate reductase (829 aa).

The tat-type signal signal peptide spans 1–30 (MKLSRRDFMKANAVAAAAAVAGVSAPTLAA). The region spanning 41–97 (ITWDKAPCRFCGTGCSVLVGSQDGRVVATQGDPDAPVNRGLNCIKGYFLSKIMYGQD) is the 4Fe-4S Mo/W bis-MGD-type domain. The [4Fe-4S] cluster site is built by Cys48, Cys51, Cys55, and Cys83. Mo-bis(molybdopterin guanine dinucleotide)-binding positions include Lys85, Gln152, Asn177, Cys181, 214–221 (WGSNMAEM), 245–249 (STFEH), 264–266 (QTD), Met374, Gln378, Asn484, 510–511 (SD), Lys533, Asp560, and 719–728 (TGRVLEHWHT). A substrate-binding site is contributed by Phe795. Mo-bis(molybdopterin guanine dinucleotide) is bound by residues Asn803 and Lys820.

It belongs to the prokaryotic molybdopterin-containing oxidoreductase family. NasA/NapA/NarB subfamily. In terms of assembly, component of the periplasmic nitrate reductase NapAB complex composed of NapA and NapB. [4Fe-4S] cluster is required as a cofactor. Requires Mo-bis(molybdopterin guanine dinucleotide) as cofactor. Predicted to be exported by the Tat system. The position of the signal peptide cleavage has not been experimentally proven.

It localises to the periplasm. The enzyme catalyses 2 Fe(II)-[cytochrome] + nitrate + 2 H(+) = 2 Fe(III)-[cytochrome] + nitrite + H2O. Functionally, catalytic subunit of the periplasmic nitrate reductase complex NapAB. Receives electrons from NapB and catalyzes the reduction of nitrate to nitrite. The polypeptide is Periplasmic nitrate reductase (Aeromonas hydrophila subsp. hydrophila (strain ATCC 7966 / DSM 30187 / BCRC 13018 / CCUG 14551 / JCM 1027 / KCTC 2358 / NCIMB 9240 / NCTC 8049)).